The sequence spans 238 residues: 7-carboxy-7-deazaguanine synthase (238 aa).

Substrate is bound by residues 14–16 and Arg29; that span reads IQG. The 215-residue stretch at 20 to 234 folds into the Radical SAM core domain; the sequence is VVGQKTMFIR…PQLHALVWGN (215 aa). [4Fe-4S] cluster-binding residues include Cys33, Cys37, and Cys40. Ser42 serves as a coordination point for Mg(2+). Ser80 contributes to the substrate binding site. S-adenosyl-L-methionine is bound by residues Gly82 and 126–128; that span reads SPK.

Belongs to the radical SAM superfamily. 7-carboxy-7-deazaguanine synthase family. As to quaternary structure, homodimer. The cofactor is [4Fe-4S] cluster. S-adenosyl-L-methionine is required as a cofactor. Mg(2+) serves as cofactor.

The catalysed reaction is 6-carboxy-5,6,7,8-tetrahydropterin + H(+) = 7-carboxy-7-deazaguanine + NH4(+). The protein operates within purine metabolism; 7-cyano-7-deazaguanine biosynthesis. In terms of biological role, catalyzes the complex heterocyclic radical-mediated conversion of 6-carboxy-5,6,7,8-tetrahydropterin (CPH4) to 7-carboxy-7-deazaguanine (CDG), a step common to the biosynthetic pathways of all 7-deazapurine-containing compounds. This Bacillus cereus (strain ATCC 14579 / DSM 31 / CCUG 7414 / JCM 2152 / NBRC 15305 / NCIMB 9373 / NCTC 2599 / NRRL B-3711) protein is 7-carboxy-7-deazaguanine synthase.